A 750-amino-acid chain; its full sequence is Tyrosine-protein phosphatase 2 (750 aa).

The segment at 1 to 20 (MDRIAQQYRNGKRDNNGNRM) is disordered. The residue at position 258 (serine 258) is a Phosphoserine. Disordered regions lie at residues 327–348 (LHQK…SKLY) and 425–450 (VKLP…DKSY). Residues 330-348 (KQLSQKQRGPQSTDDSKLY) show a composition bias toward polar residues. The region spanning 383-737 (SPSPLSSDDT…IACYEALLNY (355 aa)) is the Tyrosine-protein phosphatase domain. Serine 430 carries the phosphoserine modification. Residue cysteine 666 is the Phosphocysteine intermediate of the active site.

Belongs to the protein-tyrosine phosphatase family. Non-receptor class subfamily. As to quaternary structure, interacts with HOG1.

The protein localises to the cytoplasm. Its subcellular location is the nucleus. The catalysed reaction is O-phospho-L-tyrosyl-[protein] + H2O = L-tyrosyl-[protein] + phosphate. In terms of biological role, major phosphatase responsible with PTP3 for tyrosine dephosphorylation of MAP kinase HOG1 to inactivate its activity. May also be involved in the regulation of MAP kinase FUS3. May be implicated in the ubiquitin-mediated protein degradation. The sequence is that of Tyrosine-protein phosphatase 2 (PTP2) from Saccharomyces cerevisiae (strain ATCC 204508 / S288c) (Baker's yeast).